Consider the following 122-residue polypeptide: Large ribosomal subunit protein uL14 (122 aa).

Belongs to the universal ribosomal protein uL14 family. As to quaternary structure, part of the 50S ribosomal subunit. Forms a cluster with proteins L3 and L19. In the 70S ribosome, L14 and L19 interact and together make contacts with the 16S rRNA in bridges B5 and B8.

Its function is as follows. Binds to 23S rRNA. Forms part of two intersubunit bridges in the 70S ribosome. The polypeptide is Large ribosomal subunit protein uL14 (Elusimicrobium minutum (strain Pei191)).